The sequence spans 324 residues: Uroporphyrinogen decarboxylase (324 aa).

Residues Arg-14–Arg-18, Phe-32, Asp-63, Tyr-136, Ser-191, and His-302 each bind substrate.

Belongs to the uroporphyrinogen decarboxylase family. As to quaternary structure, homodimer.

It localises to the cytoplasm. The enzyme catalyses uroporphyrinogen III + 4 H(+) = coproporphyrinogen III + 4 CO2. It functions in the pathway porphyrin-containing compound metabolism; protoporphyrin-IX biosynthesis; coproporphyrinogen-III from 5-aminolevulinate: step 4/4. Its function is as follows. Catalyzes the decarboxylation of four acetate groups of uroporphyrinogen-III to yield coproporphyrinogen-III. The sequence is that of Uroporphyrinogen decarboxylase from Neorickettsia sennetsu (strain ATCC VR-367 / Miyayama) (Ehrlichia sennetsu).